The primary structure comprises 167 residues: Phosphopantetheine adenylyltransferase (167 aa).

S10 is a substrate binding site. ATP-binding positions include 10-11 (SF) and H18. 3 residues coordinate substrate: K42, A79, and R93. Residues 94-96 (GLR), E104, and 129-135 (VRHITAT) contribute to the ATP site.

The protein belongs to the bacterial CoaD family. In terms of assembly, homohexamer. The cofactor is Mg(2+).

The protein resides in the cytoplasm. The enzyme catalyses (R)-4'-phosphopantetheine + ATP + H(+) = 3'-dephospho-CoA + diphosphate. It functions in the pathway cofactor biosynthesis; coenzyme A biosynthesis; CoA from (R)-pantothenate: step 4/5. Reversibly transfers an adenylyl group from ATP to 4'-phosphopantetheine, yielding dephospho-CoA (dPCoA) and pyrophosphate. The protein is Phosphopantetheine adenylyltransferase of Beijerinckia indica subsp. indica (strain ATCC 9039 / DSM 1715 / NCIMB 8712).